A 68-amino-acid polypeptide reads, in one-letter code: Suppressor of RNA silencing (68 aa).

A helical transmembrane segment spans residues 23–43 (LLTMSGAYVNVCVCIVFFILV).

This sequence belongs to the virgaviridae suppressor of RNA silencing family.

Its subcellular location is the host endoplasmic reticulum membrane. Suppressor of RNA-mediated gene silencing, also known as post-transcriptional gene silencing (PTGS), a mechanism of plant viral defense that performs sequence-specific inhibition of viral mRNAs expression. The RNA silencing suppression activity is variable depending on the origin of the isolate. In Solanum nigrum (Black nightshade), this protein is Suppressor of RNA silencing (8K protein).